Consider the following 784-residue polypeptide: Ribosome biogenesis protein BOP1 homolog (784 aa).

Basic residues predominate over residues Met1–Gly11. Positions Met1–Ile159 are disordered. Acidic residues-rich tracts occupy residues Ser27–Leu36, Glu45–Asp54, Ser62–Gly73, and Ala84–Glu111. Basic and acidic residues-rich tracts occupy residues Lys112–Pro123 and Leu138–Tyr148. Acidic residues predominate over residues Gln149 to Asp158. 7 WD repeats span residues Gly445–Glu486, Asp488–Val526, Thr570–Pro612, Lys615–Lys653, Thr656–Gln695, Leu699–Gln738, and Arg754–Thr784.

This sequence belongs to the WD repeat BOP1/ERB1 family.

It is found in the nucleus. It localises to the nucleolus. The protein resides in the nucleoplasm. Functionally, required for maturation of ribosomal RNAs and formation of the large ribosomal subunit. The polypeptide is Ribosome biogenesis protein BOP1 homolog (Drosophila sechellia (Fruit fly)).